Reading from the N-terminus, the 479-residue chain is Adenosylhomocysteinase (479 aa).

Residues Thr56, Asp134, and Glu200 each coordinate substrate. 201–203 (TTT) is an NAD(+) binding site. Positions 230 and 234 each coordinate substrate. Residues Asn235, 264-269 (GYGDVG), Glu287, Asn322, 343-345 (IGH), and Asn391 contribute to the NAD(+) site.

This sequence belongs to the adenosylhomocysteinase family. Homotetramer. NAD(+) serves as cofactor.

It carries out the reaction S-adenosyl-L-homocysteine + H2O = L-homocysteine + adenosine. The protein operates within amino-acid biosynthesis; L-homocysteine biosynthesis; L-homocysteine from S-adenosyl-L-homocysteine: step 1/1. In terms of biological role, adenosylhomocysteine is a competitive inhibitor of S-adenosyl-L-methionine-dependent methyl transferase reactions; therefore adenosylhomocysteinase may play a key role in the control of methylations via regulation of the intracellular concentration of adenosylhomocysteine. This chain is Adenosylhomocysteinase, found in Plasmodium falciparum (isolate 3D7).